A 396-amino-acid polypeptide reads, in one-letter code: 1-deoxy-D-xylulose 5-phosphate reductoisomerase (396 aa).

Positions 15, 16, 17, 18, 41, and 129 each coordinate NADPH. A 1-deoxy-D-xylulose 5-phosphate-binding site is contributed by Lys130. Position 131 (Glu131) interacts with NADPH. Asp155 is a Mn(2+) binding site. 4 residues coordinate 1-deoxy-D-xylulose 5-phosphate: Ser156, Glu157, Ser182, and His205. Residue Glu157 participates in Mn(2+) binding. Gly211 lines the NADPH pocket. Residues Ser218, Asn223, Lys224, and Glu227 each coordinate 1-deoxy-D-xylulose 5-phosphate. Position 227 (Glu227) interacts with Mn(2+).

Belongs to the DXR family. Mg(2+) serves as cofactor. It depends on Mn(2+) as a cofactor.

It catalyses the reaction 2-C-methyl-D-erythritol 4-phosphate + NADP(+) = 1-deoxy-D-xylulose 5-phosphate + NADPH + H(+). It participates in isoprenoid biosynthesis; isopentenyl diphosphate biosynthesis via DXP pathway; isopentenyl diphosphate from 1-deoxy-D-xylulose 5-phosphate: step 1/6. Functionally, catalyzes the NADPH-dependent rearrangement and reduction of 1-deoxy-D-xylulose-5-phosphate (DXP) to 2-C-methyl-D-erythritol 4-phosphate (MEP). This is 1-deoxy-D-xylulose 5-phosphate reductoisomerase from Xanthomonas axonopodis pv. citri (strain 306).